A 604-amino-acid polypeptide reads, in one-letter code: Elongation factor 4 (604 aa).

The region spanning 7–189 is the tr-type G domain; that stretch reads SRLRNFCIIA…AVVDRIPPPA (183 aa). GTP-binding positions include 19-24 and 136-139; these read DHGKST and NKID.

It belongs to the TRAFAC class translation factor GTPase superfamily. Classic translation factor GTPase family. LepA subfamily.

The protein resides in the cell inner membrane. It catalyses the reaction GTP + H2O = GDP + phosphate + H(+). Required for accurate and efficient protein synthesis under certain stress conditions. May act as a fidelity factor of the translation reaction, by catalyzing a one-codon backward translocation of tRNAs on improperly translocated ribosomes. Back-translocation proceeds from a post-translocation (POST) complex to a pre-translocation (PRE) complex, thus giving elongation factor G a second chance to translocate the tRNAs correctly. Binds to ribosomes in a GTP-dependent manner. The chain is Elongation factor 4 from Prochlorococcus marinus (strain MIT 9303).